A 492-amino-acid polypeptide reads, in one-letter code: Cytoplasmic dynein 1 light intermediate chain 2 (492 aa).

61 to 68 lines the ATP pocket; sequence GEDGSGKT. Disordered regions lie at residues 187-206, 371-423, and 437-492; these read PEEGCQGSPQRRGPLTSGSD, AKQP…KNNA, and LSKK…ENEA. Ser-194 is modified (phosphoserine). The segment covering 371-381 has biased composition (polar residues); that stretch reads AKQPATPTRAS. Residues Ser-383 and Ser-391 each carry the phosphoserine modification. An Omega-N-methylarginine modification is found at Arg-397. Residues 400–412 are compositionally biased toward low complexity; sequence PASVPSSSPGTSV. Residue Thr-441 is modified to Phosphothreonine. A phosphoserine mark is found at Ser-443 and Ser-446. Residues 452–469 are compositionally biased toward polar residues; sequence VQSTAKKSGQKTVLSNVQ. Basic and acidic residues predominate over residues 471–480; the sequence is ELDRMTRKPD. The segment covering 482–492 has biased composition (polar residues); the sequence is MVTNSSTENEA.

The protein belongs to the dynein light intermediate chain family. Homodimer. The cytoplasmic dynein 1 complex consists of two catalytic heavy chains (HCs) and a number of non-catalytic subunits presented by intermediate chains (ICs), light intermediate chains (LICs) and light chains (LCs); the composition seems to vary in respect to the IC, LIC and LC composition. The heavy chain homodimer serves as a scaffold for the probable homodimeric assembly of the respective non-catalytic subunits. The ICs and LICs bind directly to the HC dimer and the LCs assemble on the IC dimer. Interacts with DYNC1H1; DYNC1LI1 and DYNC1LI2 bind mutually exclusive to DYNC1H.

Its subcellular location is the cytoplasm. The protein resides in the cytoskeleton. Its function is as follows. Acts as one of several non-catalytic accessory components of the cytoplasmic dynein 1 complex that are thought to be involved in linking dynein to cargos and to adapter proteins that regulate dynein function. Cytoplasmic dynein 1 acts as a motor for the intracellular retrograde motility of vesicles and organelles along microtubules. May play a role in binding dynein to membranous organelles or chromosomes. This chain is Cytoplasmic dynein 1 light intermediate chain 2, found in Homo sapiens (Human).